The sequence spans 433 residues: Trigger factor (433 aa).

In terms of domain architecture, PPIase FKBP-type spans 163 to 248 (GDTVNIDFSG…VNEIKFKEVP (86 aa)).

This sequence belongs to the FKBP-type PPIase family. Tig subfamily.

The protein resides in the cytoplasm. It carries out the reaction [protein]-peptidylproline (omega=180) = [protein]-peptidylproline (omega=0). Functionally, involved in protein export. Acts as a chaperone by maintaining the newly synthesized protein in an open conformation. Functions as a peptidyl-prolyl cis-trans isomerase. This Staphylococcus aureus (strain bovine RF122 / ET3-1) protein is Trigger factor.